The chain runs to 640 residues: 1-deoxy-D-xylulose-5-phosphate synthase (640 aa).

Thiamine diphosphate-binding positions include His78 and 119–121 (GHS). Mg(2+) is bound at residue Asp151. Thiamine diphosphate contacts are provided by residues 152–153 (GA), Asn180, Tyr289, and Glu371. Asn180 contributes to the Mg(2+) binding site.

Belongs to the transketolase family. DXPS subfamily. Homodimer. It depends on Mg(2+) as a cofactor. Requires thiamine diphosphate as cofactor.

It carries out the reaction D-glyceraldehyde 3-phosphate + pyruvate + H(+) = 1-deoxy-D-xylulose 5-phosphate + CO2. It participates in metabolic intermediate biosynthesis; 1-deoxy-D-xylulose 5-phosphate biosynthesis; 1-deoxy-D-xylulose 5-phosphate from D-glyceraldehyde 3-phosphate and pyruvate: step 1/1. Functionally, catalyzes the acyloin condensation reaction between C atoms 2 and 3 of pyruvate and glyceraldehyde 3-phosphate to yield 1-deoxy-D-xylulose-5-phosphate (DXP). This chain is 1-deoxy-D-xylulose-5-phosphate synthase, found in Bartonella quintana (strain Toulouse) (Rochalimaea quintana).